Reading from the N-terminus, the 316-residue chain is MNLSPNQKADVLIESLPYIKKFYNEIVVIKYGGSAMVNDELKESIIKDIVLMKYVGMHPVVVHGGGPEITNMLKVFDKESKFVDGLRVTDQATMEITEMVLLGKVCQEIVTRINQNGVRSIGICGKDGSMIKTVPKDPELGLVGGITSIDTDLIKTIIEKGYIPVISPIGCGPAGESHNINADEVAGKLAAALGAKKLMLITDVAGVLRDQHDEASLISDIKTNEIEEYIETGVIKGGMIPKISCCFDAVANGVERAHIIDGRKSHSMLLEIFTDQGVGTMITHGGDQNGNSKNNKQWKSIFNEHLWENAYSLPGR.

Residues 65-66 (GG), arginine 87, and asparagine 179 contribute to the substrate site.

This sequence belongs to the acetylglutamate kinase family. ArgB subfamily.

Its subcellular location is the cytoplasm. The catalysed reaction is N-acetyl-L-glutamate + ATP = N-acetyl-L-glutamyl 5-phosphate + ADP. The protein operates within amino-acid biosynthesis; L-arginine biosynthesis; N(2)-acetyl-L-ornithine from L-glutamate: step 2/4. Functionally, catalyzes the ATP-dependent phosphorylation of N-acetyl-L-glutamate. This Alkaliphilus metalliredigens (strain QYMF) protein is Acetylglutamate kinase.